Consider the following 693-residue polypeptide: Elongation factor G (693 aa).

In terms of domain architecture, tr-type G spans 8–284 (HMVRNIGIAA…AVIDYLPAPD (277 aa)). GTP is bound by residues 17 to 24 (AHIDAGKT), 81 to 85 (DTPGH), and 135 to 138 (NKMD).

Belongs to the TRAFAC class translation factor GTPase superfamily. Classic translation factor GTPase family. EF-G/EF-2 subfamily.

It localises to the cytoplasm. Catalyzes the GTP-dependent ribosomal translocation step during translation elongation. During this step, the ribosome changes from the pre-translocational (PRE) to the post-translocational (POST) state as the newly formed A-site-bound peptidyl-tRNA and P-site-bound deacylated tRNA move to the P and E sites, respectively. Catalyzes the coordinated movement of the two tRNA molecules, the mRNA and conformational changes in the ribosome. The sequence is that of Elongation factor G from Nautilia profundicola (strain ATCC BAA-1463 / DSM 18972 / AmH).